Here is a 201-residue protein sequence, read N- to C-terminus: Recombination protein RecR (201 aa).

A C4-type zinc finger spans residues 60 to 75; the sequence is CSRCGNVDTVDPCTVC. The 96-residue stretch at 83-178 folds into the Toprim domain; the sequence is SIIIVVEDVS…KITRLAHGVP (96 aa).

This sequence belongs to the RecR family.

Its function is as follows. May play a role in DNA repair. It seems to be involved in an RecBC-independent recombinational process of DNA repair. It may act with RecF and RecO. This chain is Recombination protein RecR, found in Rhizobium leguminosarum bv. trifolii (strain WSM2304).